The sequence spans 64 residues: MPKAKTHSGASKRFRRTGTGKIVRQKANRRHLLEHKSSKRTRRLDGRTTVAANDTKRVKSLLNG.

Over residues 1–42 the composition is skewed to basic residues; it reads MPKAKTHSGASKRFRRTGTGKIVRQKANRRHLLEHKSSKRTR. A disordered region spans residues 1 to 64; sequence MPKAKTHSGA…TKRVKSLLNG (64 aa).

It belongs to the bacterial ribosomal protein bL35 family.

The sequence is that of Large ribosomal subunit protein bL35 from Mycobacterium ulcerans (strain Agy99).